A 642-amino-acid polypeptide reads, in one-letter code: Chaperone protein HtpG (642 aa).

Residues Met1–Arg350 are a; substrate-binding. Residues Glu351–Arg567 form a b region. The tract at residues Leu568–Lys642 is c.

This sequence belongs to the heat shock protein 90 family. Homodimer.

It is found in the cytoplasm. Functionally, molecular chaperone. Has ATPase activity. In Marinomonas sp. (strain MWYL1), this protein is Chaperone protein HtpG.